The chain runs to 444 residues: Bifunctional enolase 2/transcriptional activator (444 aa).

Substrate contacts are provided by H163 and E172. Residue E215 is the Proton donor of the active site. Positions 250, 300, and 327 each coordinate Mg(2+). Substrate is bound by residues E300 and D327. K352 (proton acceptor) is an active-site residue. Residues 379-382 (SHRS) and K403 each bind substrate.

This sequence belongs to the enolase family. Homodimer. Mg(2+) is required as a cofactor.

The protein localises to the cytoplasm. It is found in the cytosol. Its subcellular location is the nucleus. It localises to the mitochondrion outer membrane. The catalysed reaction is (2R)-2-phosphoglycerate = phosphoenolpyruvate + H2O. Its pathway is carbohydrate degradation; glycolysis; pyruvate from D-glyceraldehyde 3-phosphate: step 4/5. In terms of biological role, multifunctional enzyme that acts as an enolase involved in the metabolism and as a positive regulator of cold-responsive gene transcription. Binds to the cis-element the gene promoter of STZ/ZAT10, a zinc finger transcriptional repressor. In Arabidopsis thaliana (Mouse-ear cress), this protein is Bifunctional enolase 2/transcriptional activator (ENO2).